The following is a 213-amino-acid chain: Ras-related protein Rab-25 (213 aa).

GTP contacts are provided by Ser21, Gly24, Lys25, Thr26, Asn27, Ser38, His39, Thr43, and Thr44. Thr26 lines the Mg(2+) pocket. Short sequence motifs (switch) lie at residues Asn35 to Phe49 and Asp67 to Gly84. Mg(2+)-binding residues include Thr44 and Asp67. Residues Gly70, Asn125, Lys126, Asp128, Ala156, and Leu157 each coordinate GTP. S-geranylgeranyl cysteine attachment occurs at residues Cys209 and Cys210. The residue at position 210 (Cys210) is a Cysteine methyl ester. Residues Ile211–Leu213 constitute a propeptide, removed in mature form.

It belongs to the small GTPase superfamily. Rab family. Interacts (GTP-bound form) with RAB11FIP1, RAB11FIP2, RAB11FIP3 and RAB11FIP4. Interacts (via the hypervariable C-terminal region) with ITGB1 (via the cytoplasmic region); the interaction is GTP-dependent. Interacts with ITGAV. Associates with the integrin alpha-V/beta-1 heterodimer. Interacts with VPS33B. Requires Mg(2+) as cofactor.

The protein resides in the cell membrane. It is found in the cell projection. Its subcellular location is the pseudopodium membrane. It localises to the cytoplasmic vesicle. It carries out the reaction GTP + H2O = GDP + phosphate + H(+). Regulated by guanine nucleotide exchange factors (GEFs) which promote the exchange of bound GDP for free GTP. Regulated by GTPase activating proteins (GAPs) which increase the GTP hydrolysis activity. Inhibited by GDP dissociation inhibitors (GDIs) which prevent Rab-GDP dissociation. Functionally, the small GTPases Rab are key regulators of intracellular membrane trafficking, from the formation of transport vesicles to their fusion with membranes. Rabs cycle between an inactive GDP-bound form and an active GTP-bound form that is able to recruit to membranes different set of downstream effectors directly responsible for vesicle formation, movement, tethering and fusion. RAB25 regulates epithelial cell differentiation, proliferation and survival, thereby playing key roles in tumorigenesis. Promotes invasive migration of cells in which it functions to localize and maintain integrin alpha-V/beta-1 at the tips of extending pseudopodia. Involved in the regulation of epithelial morphogenesis through the control of CLDN4 expression and localization at tight junctions. May selectively regulate the apical recycling pathway. Together with MYO5B regulates transcytosis. The chain is Ras-related protein Rab-25 (RAB25) from Canis lupus familiaris (Dog).